A 627-amino-acid chain; its full sequence is 1-deoxy-D-xylulose-5-phosphate synthase (627 aa).

Thiamine diphosphate-binding positions include His76 and 117-119 (SHA). Mg(2+) is bound at residue Asp148. Thiamine diphosphate-binding positions include 149 to 150 (GA), Asn178, Phe288, and Glu370. Mg(2+) is bound at residue Asn178.

It belongs to the transketolase family. DXPS subfamily. As to quaternary structure, homodimer. The cofactor is Mg(2+). Requires thiamine diphosphate as cofactor.

It carries out the reaction D-glyceraldehyde 3-phosphate + pyruvate + H(+) = 1-deoxy-D-xylulose 5-phosphate + CO2. It functions in the pathway metabolic intermediate biosynthesis; 1-deoxy-D-xylulose 5-phosphate biosynthesis; 1-deoxy-D-xylulose 5-phosphate from D-glyceraldehyde 3-phosphate and pyruvate: step 1/1. Its function is as follows. Catalyzes the acyloin condensation reaction between C atoms 2 and 3 of pyruvate and glyceraldehyde 3-phosphate to yield 1-deoxy-D-xylulose-5-phosphate (DXP). The polypeptide is 1-deoxy-D-xylulose-5-phosphate synthase (Cutibacterium acnes (strain DSM 16379 / KPA171202) (Propionibacterium acnes)).